The chain runs to 426 residues: Serine hydroxymethyltransferase (426 aa).

Residues leucine 118 and 122–124 (GHL) each bind (6S)-5,6,7,8-tetrahydrofolate. Lysine 227 carries the post-translational modification N6-(pyridoxal phosphate)lysine.

Belongs to the SHMT family. Homodimer. The cofactor is pyridoxal 5'-phosphate.

The protein resides in the cytoplasm. The enzyme catalyses (6R)-5,10-methylene-5,6,7,8-tetrahydrofolate + glycine + H2O = (6S)-5,6,7,8-tetrahydrofolate + L-serine. The protein operates within one-carbon metabolism; tetrahydrofolate interconversion. Its pathway is amino-acid biosynthesis; glycine biosynthesis; glycine from L-serine: step 1/1. In terms of biological role, catalyzes the reversible interconversion of serine and glycine with tetrahydrofolate (THF) serving as the one-carbon carrier. This reaction serves as the major source of one-carbon groups required for the biosynthesis of purines, thymidylate, methionine, and other important biomolecules. Also exhibits THF-independent aldolase activity toward beta-hydroxyamino acids, producing glycine and aldehydes, via a retro-aldol mechanism. This is Serine hydroxymethyltransferase from Mycobacterium avium (strain 104).